The primary structure comprises 345 residues: Phosphoribosylformylglycinamidine cyclo-ligase (345 aa).

Belongs to the AIR synthase family.

It localises to the cytoplasm. The enzyme catalyses 2-formamido-N(1)-(5-O-phospho-beta-D-ribosyl)acetamidine + ATP = 5-amino-1-(5-phospho-beta-D-ribosyl)imidazole + ADP + phosphate + H(+). It participates in purine metabolism; IMP biosynthesis via de novo pathway; 5-amino-1-(5-phospho-D-ribosyl)imidazole from N(2)-formyl-N(1)-(5-phospho-D-ribosyl)glycinamide: step 2/2. The polypeptide is Phosphoribosylformylglycinamidine cyclo-ligase (Shewanella oneidensis (strain ATCC 700550 / JCM 31522 / CIP 106686 / LMG 19005 / NCIMB 14063 / MR-1)).